Here is a 701-residue protein sequence, read N- to C-terminus: Elongation factor G (701 aa).

The 279-residue stretch at 8–286 (DRVRNIGIIA…AVVLLLPSPL (279 aa)) folds into the tr-type G domain. GTP contacts are provided by residues 17–24 (AHIDAGKT), 85–89 (DTPGH), and 139–142 (NKMD).

The protein belongs to the TRAFAC class translation factor GTPase superfamily. Classic translation factor GTPase family. EF-G/EF-2 subfamily.

Its subcellular location is the cytoplasm. Functionally, catalyzes the GTP-dependent ribosomal translocation step during translation elongation. During this step, the ribosome changes from the pre-translocational (PRE) to the post-translocational (POST) state as the newly formed A-site-bound peptidyl-tRNA and P-site-bound deacylated tRNA move to the P and E sites, respectively. Catalyzes the coordinated movement of the two tRNA molecules, the mRNA and conformational changes in the ribosome. In Herpetosiphon aurantiacus (strain ATCC 23779 / DSM 785 / 114-95), this protein is Elongation factor G.